The chain runs to 591 residues: F420 non-reducing hydrogenase II large subunit (591 aa).

Residue Glu42 coordinates Mg(2+). 4 residues coordinate Ni(2+): Cys61, Cys64, Cys569, and Cys572. Cys64 serves as a coordination point for Fe cation. Fe cation is bound at residue Cys572. His575 provides a ligand contact to Mg(2+).

The protein belongs to the [NiFe]/[NiFeSe] hydrogenase large subunit family. In terms of assembly, composed of a large subunit (VhtA), a small subunit (VhtG) and a cytochrome subunit (VhtC). Requires Ni(2+) as cofactor. The cofactor is Fe cation.

The protein localises to the cell membrane. It carries out the reaction methanophenazine + H2 = dihydromethanophenazine. Part of the F420 non-reducing hydrogenase II complex that catalyzes the reduction of methanophenazine to dihydromethanophenazine. The sequence is that of F420 non-reducing hydrogenase II large subunit from Methanosarcina mazei (strain ATCC BAA-159 / DSM 3647 / Goe1 / Go1 / JCM 11833 / OCM 88) (Methanosarcina frisia).